Consider the following 539-residue polypeptide: Alpha-aminoadipic semialdehyde dehydrogenase (539 aa).

The transit peptide at M1 to A26 directs the protein to the mitochondrion. K86, K94, and K97 each carry N6-acetyllysine; alternate. N6-succinyllysine; alternate is present on residues K86, K94, and K97. Residues T192 to F194, K218, G258 to T259, G274 to S275, G274 to G279, and E296 to L297 each bind NAD(+). Residue E296 is the Proton acceptor of the active site. C330 acts as the Nucleophile in catalysis. Residue T331 coordinates (S)-2-amino-6-oxohexanoate. E427 contributes to the NAD(+) binding site. K462 is modified (N6-acetyllysine). Positions 489 and 490 each coordinate (S)-2-amino-6-oxohexanoate. K500 carries the N6-acetyllysine modification. At K537 the chain carries N6-succinyllysine.

This sequence belongs to the aldehyde dehydrogenase family. As to quaternary structure, homotetramer. In terms of tissue distribution, abundant in kidney, liver, cochlea and outer hair cells but not inner hair cells or vestibular type I hair cells. Very low levels in lung, brain, intestine and pancreas.

The protein localises to the cytoplasm. It localises to the cytosol. The protein resides in the nucleus. It is found in the mitochondrion. The enzyme catalyses nonanal + NAD(+) + H2O = nonanoate + NADH + 2 H(+). It carries out the reaction (S)-2-amino-6-oxohexanoate + NAD(+) + H2O = L-2-aminoadipate + NADH + 2 H(+). It catalyses the reaction betaine aldehyde + NAD(+) + H2O = glycine betaine + NADH + 2 H(+). The catalysed reaction is an aldehyde + NAD(+) + H2O = a carboxylate + NADH + 2 H(+). The enzyme catalyses hexanal + NAD(+) + H2O = hexanoate + NADH + 2 H(+). It carries out the reaction octanal + NAD(+) + H2O = octanoate + NADH + 2 H(+). It catalyses the reaction (E)-non-2-enal + NAD(+) + H2O = (E)-non-2-enoate + NADH + 2 H(+). The catalysed reaction is (E)-4-hydroxynon-2-enal + NAD(+) + H2O = (E)-4-hydroxynon-2-enoate + NADH + 2 H(+). It functions in the pathway amine and polyamine biosynthesis; betaine biosynthesis via choline pathway; betaine from betaine aldehyde: step 1/1. In terms of biological role, multifunctional enzyme mediating important protective effects. Metabolizes betaine aldehyde to betaine, an important cellular osmolyte and methyl donor. Protects cells from oxidative stress by metabolizing a number of lipid peroxidation-derived aldehydes. Involved in lysine catabolism. This Rattus norvegicus (Rat) protein is Alpha-aminoadipic semialdehyde dehydrogenase.